Reading from the N-terminus, the 198-residue chain is MIISKDTKDLIFSILTILFVILCLNLIVFFSYNKAVEVNQSIFLMMLLLNLSFIIISLLYLLFLKKLVKFPALLNLFLGILFSFSSLQDLIISLNMFYQILSFSKFIYIFIIFIIIYILFLSFFLTAIKKKLKNKNTYSKPINKTIFIIAALIGIVFSKINFNIPQYYIISFLMYVFSCIFTFGFYHIYIYINSVKNN.

The protein resides in the cell membrane. In terms of biological role, involved in copy number control of pIP404. This basic and hydrophobic protein may exert its effect from the cytoplasmic membrane. The chain is Copy number protein (cop) from Clostridium perfringens.